We begin with the raw amino-acid sequence, 713 residues long: Phosphoribosylformylglycinamidine synthase subunit PurL (713 aa).

Residue His34 is part of the active site. Residues Tyr37 and Arg73 each coordinate ATP. Glu75 is a Mg(2+) binding site. Residues 76–79 (SHNH) and Arg98 each bind substrate. The active-site Proton acceptor is His77. Position 99 (Asp99) interacts with Mg(2+). Gln221 serves as a coordination point for substrate. A Mg(2+)-binding site is contributed by Asp249. 292 to 294 (ESQ) contacts substrate. 2 residues coordinate ATP: Asp474 and Gly511. Ser514 contributes to the substrate binding site.

It belongs to the FGAMS family. Monomer. Part of the FGAM synthase complex composed of 1 PurL, 1 PurQ and 2 PurS subunits.

The protein resides in the cytoplasm. It carries out the reaction N(2)-formyl-N(1)-(5-phospho-beta-D-ribosyl)glycinamide + L-glutamine + ATP + H2O = 2-formamido-N(1)-(5-O-phospho-beta-D-ribosyl)acetamidine + L-glutamate + ADP + phosphate + H(+). The protein operates within purine metabolism; IMP biosynthesis via de novo pathway; 5-amino-1-(5-phospho-D-ribosyl)imidazole from N(2)-formyl-N(1)-(5-phospho-D-ribosyl)glycinamide: step 1/2. Its function is as follows. Part of the phosphoribosylformylglycinamidine synthase complex involved in the purines biosynthetic pathway. Catalyzes the ATP-dependent conversion of formylglycinamide ribonucleotide (FGAR) and glutamine to yield formylglycinamidine ribonucleotide (FGAM) and glutamate. The FGAM synthase complex is composed of three subunits. PurQ produces an ammonia molecule by converting glutamine to glutamate. PurL transfers the ammonia molecule to FGAR to form FGAM in an ATP-dependent manner. PurS interacts with PurQ and PurL and is thought to assist in the transfer of the ammonia molecule from PurQ to PurL. The polypeptide is Phosphoribosylformylglycinamidine synthase subunit PurL (Ignicoccus hospitalis (strain KIN4/I / DSM 18386 / JCM 14125)).